The primary structure comprises 202 residues: Xanthine phosphoribosyltransferase (202 aa).

2 residues coordinate xanthine: leucine 20 and asparagine 27. 128–132 contacts 5-phospho-alpha-D-ribose 1-diphosphate; the sequence is ANGEA. Lysine 156 lines the xanthine pocket.

The protein belongs to the purine/pyrimidine phosphoribosyltransferase family. Xpt subfamily. Homodimer.

It localises to the cytoplasm. The catalysed reaction is XMP + diphosphate = xanthine + 5-phospho-alpha-D-ribose 1-diphosphate. It participates in purine metabolism; XMP biosynthesis via salvage pathway; XMP from xanthine: step 1/1. Functionally, converts the preformed base xanthine, a product of nucleic acid breakdown, to xanthosine 5'-monophosphate (XMP), so it can be reused for RNA or DNA synthesis. The sequence is that of Xanthine phosphoribosyltransferase from Alkaliphilus metalliredigens (strain QYMF).